A 541-amino-acid chain; its full sequence is Protein wntless homolog (541 aa).

Residues 1–15 (MAGAIIENMSTKKLC) lie on the Cytoplasmic side of the membrane. Residues 16-36 (IVGGILLVFQIIAFLVGGLIA) form a helical membrane-spanning segment. The Lumenal segment spans residues 37–232 (PGPTTAVSYM…GIHQNGGFTK (196 aa)). The segment at 101–232 (MEMSPWFQFM…GIHQNGGFTK (132 aa)) is interaction with Wnt proteins. The chain crosses the membrane as a helical span at residues 233–253 (VWFAMKTFLTPSIFIIMVWYW). The Cytoplasmic segment spans residues 254–268 (RRITMMSRPPVLLEK). A helical membrane pass occupies residues 269 to 289 (VIFALGISMTFINIPVEWFSI). Topologically, residues 290–303 (GFDWTWMLLFGDIR) are lumenal. Residues 304-324 (QGIFYAMLLSFWIIFCGEHMM) form a helical membrane-spanning segment. Residues 325-331 (DQHERNH) lie on the Cytoplasmic side of the membrane. A helical transmembrane segment spans residues 332-352 (IAGYWKQVGPIAVGSFCLFIF). The Lumenal segment spans residues 353 to 380 (DMCERGVQLTNPFYSIWTTDIGTELAMA). The chain crosses the membrane as a helical span at residues 381–401 (FIIVAGICLCLYFLFLCFMVF). At 402–431 (QVFRNISGKQSSLPAMSKVRRLHYEGLIFR) the chain is on the cytoplasmic side. A helical membrane pass occupies residues 432–452 (FKFLMLITLACAAMTVIFFIV). Topologically, residues 453–471 (SQVTEGHWKWGGVTVQVNS) are lumenal. A helical membrane pass occupies residues 472–492 (AFFTGIYGMWNLYVFALMFLY). Residues 493–541 (APSHKNYGEDQSNGDLGVHSGEELQLTTTITHVDGPTEIYKLTRKEAQE) lie on the Cytoplasmic side of the membrane.

This sequence belongs to the wntless family. Interacts with WNT3A. Interacts with WNT1, WNT3 and WNT5A. In terms of processing, N-glycosylated.

It localises to the golgi apparatus membrane. The protein resides in the cytoplasmic vesicle membrane. It is found in the cell membrane. The protein localises to the endoplasmic reticulum membrane. Its subcellular location is the early endosome membrane. Regulates Wnt proteins sorting and secretion in a feedback regulatory mechanism. This reciprocal interaction plays a key role in the regulation of expression, subcellular location, binding and organelle-specific association of Wnt proteins. Plays also an important role in establishment of the anterior-posterior body axis formation during development. This Homo sapiens (Human) protein is Protein wntless homolog (WLS).